The primary structure comprises 121 residues: Large ribosomal subunit protein uL22 (121 aa).

The protein belongs to the universal ribosomal protein uL22 family. As to quaternary structure, part of the 50S ribosomal subunit.

Its function is as follows. This protein binds specifically to 23S rRNA; its binding is stimulated by other ribosomal proteins, e.g. L4, L17, and L20. It is important during the early stages of 50S assembly. It makes multiple contacts with different domains of the 23S rRNA in the assembled 50S subunit and ribosome. The globular domain of the protein is located near the polypeptide exit tunnel on the outside of the subunit, while an extended beta-hairpin is found that lines the wall of the exit tunnel in the center of the 70S ribosome. This chain is Large ribosomal subunit protein uL22, found in Arthrobacter sp. (strain FB24).